The sequence spans 1473 residues: NACHT, LRR and PYD domains-containing protein 1 (1473 aa).

The Pyrin domain occupies 1–92; that stretch reads MAGGAWGRLA…CAQAQEGAGH (92 aa). The disordered stretch occupies residues 90 to 113; sequence AGHSPSFPYSPSEPHLGSPSQPTS. Residues serine 93, serine 99, and serine 101 each carry the phosphoserine; by MAPK11 and MAPK14 modification. Phosphoserine; by MAPK14 is present on serine 107. Positions 111-117 match the ZAKalpha motif 1 motif; it reads PTSTAVL. A Phosphothreonine; by MAPK11, MAPK14 and MAP3K20 modification is found at threonine 112. Phosphoserine; by MAP3K20 is present on serine 113. A phosphothreonine; by MAP3K20 mark is found at threonine 114 and threonine 129. At serine 132 the chain carries Phosphoserine; by MAP3K20. A disordered region spans residues 160–254; it reads LPSSPDHESP…HTSLQPHHHP (95 aa). A Phosphoserine; by MAPK14 modification is found at serine 163. At serine 168 the chain carries Phosphoserine; by MAPK11 and MAPk14. A Phosphoserine; by MAPK11 and MAPK14 modification is found at serine 170. Over residues 170-182 the composition is skewed to polar residues; it reads SQESPNAPTSTAV. Serine 173 carries the post-translational modification Phosphoserine; by MAPK11. Positions 177–183 match the ZAKalpha motif 2 motif; that stretch reads PTSTAVL. The residue at position 178 (threonine 178) is a Phosphothreonine; by MAPK11. At serine 179 the chain carries Phosphoserine; by MAPK11 and MAP3K20. Position 180 is a phosphothreonine; by MAPK11 and MAP3K20 (threonine 180). Over residues 218–231 the composition is skewed to basic and acidic residues; that stretch reads EIREREREKSEKGR. The NACHT domain maps to 328-637; the sequence is RIVILQGAAG…EFFAAMSYVL (310 aa). 334–341 serves as a coordination point for ATP; the sequence is GAAGIGKS. LRR repeat units follow at residues 809–830, 838–858, 866–887, 895–915, 923–944, and 950–973; these read NLKE…SLCK, LLET…KDLA, TLTE…HLCQ, KLQR…QDLA, SLKE…LLCE, and ACKL…ELRA. A disordered region spans residues 991-1017; the sequence is VMTPTEGLDTGEMSNSTSSLKRQRLGS. The segment at 1079 to 1212 is ZU5; sequence FWGPTGPVAT…HHIVLENPSF (134 aa). An FIIND domain is found at 1079–1364; that stretch reads FWGPTGPVAT…LMPATTLIPP (286 aa). The segment at 1213–1364 is UPA; that stretch reads SPLGVLLKMI…LMPATTLIPP (152 aa). The CARD domain occupies 1374 to 1463; that stretch reads DAPQLLHFVD…HLIMELWEKG (90 aa).

Belongs to the NLRP family. In terms of assembly, interacts (via LRR repeats) with BCL2 and BCL2L1 (via the loop between motifs BH4 and BH3); these interactions reduce NLRP1 inflammasome-induced CASP1 activation and IL1B release, possibly by impairing NLRP1 interaction with PYCARD. Interacts with NOD2; this interaction is enhanced in the presence of muramyl dipeptide (MDP) and increases IL1B release. Interacts with EIF2AK2/PKR; this interaction requires EIF2AK2 activity, is accompanied by EIF2AK2 autophosphorylation and promotes inflammasome assembly in response to danger-associated signals. Interacts with MEFV; this interaction targets NLRP1 to degradation by autophagy, hence preventing excessive IL1B- and IL18-mediated inflammation. Binds (via LRR domain) to dsDNA and dsRNA. Interacts with DPP9; leading to inhibit activation of the inflammasome. DPP9 acts via formation of a ternary complex, composed of a DPP9 homodimer, one full-length NLRP1 protein, and one cleaved C-terminus of NLRP1 (NACHT, LRR and PYD domains-containing protein 1, C-terminus). Interacts with DPP8; leading to inhibit activation of the inflammasome, probably via formation of a ternary complex with DPP8. Interacts with the C-terminal part of NLRP1 (NACHT, LRR and PYD domains-containing protein 1, C-terminus) in absence of pathogens and other damage-associated signals. As to quaternary structure, interacts with the N-terminal part of NLRP1 (NACHT, LRR and PYD domains-containing protein 1, N-terminus) in absence of pathogens and other damage-associated signals. Homomultimer; forms the NLRP1 inflammasome polymeric complex, a filament composed of homopolymers of this form in response to pathogens and other damage-associated signals. The NLRP1 inflammasome polymeric complex associates with PYCARD/ASC. Interacts (via CARD domain) with PYCARD/ASC (via CARD domain); leading to pro-caspase-1 (proCASP1) recruitment. Pro-caspase-1 (proCASP1) filament formation increases local enzyme concentration, resulting in trans-autocleavage and activation. Active CASP1 then processes IL1B and IL18 precursors, leading to the release of mature cytokines in the extracellular milieu and inflammatory response. In terms of assembly, (Microbial infection) Interacts with vaccinia virus protein F1. (Microbial infection) Interacts with human herpes virus 8/HHV-8 proteins ORF45; relieving autoinhibition of the NLRP1 inflammasome. Post-translationally, autocatalytically cleaved. Autocatalytic cleavage in FIIND region occurs constitutively, prior to activation signals, and is required for inflammasome activity (IL1B release), possibly by facilitating CASP1 binding. Both N- and C-terminal parts remain associated non-covalently. Ubiquitinated by the cullin:ZER1/ZYG11B complex in response to pathogen-associated signals, leading to its degradation by the proteasome and subsequent release of the cleaved C-terminal part of the protein (NACHT, LRR and PYD domains-containing protein 1, C-terminus), which polymerizes and forms the NLRP1 inflammasome. In terms of processing, phosphorylated by MAP3K20 isoform ZAKalpha, MAPK11 and MAPK14 in response to UV-B irradiation and ribosome collisions, promoting activation of the NLRP1 inflammasome and pyroptosis. Post-translationally, (Microbial infection) Cleaved between Gln-130 and Gly-131 by the Protease 3C from various human enteroviruses and rhinoviruses (EV68, EV71, Coxsackievirus B3, HRV-14 and HRV-16). This cleavage triggers N-glycine-mediated proteasomal degradation of the autoinhibitory NLRP1 N-terminal fragment via the cullin:ZER1/ZYG11B complex which liberates the activating C-terminal fragment and activates NLRP1 inflammasome. (Microbial infection) Cleaved between Gln-333 and Gly-334 by the 3C-like proteinase nsp5 from human coronavirus SARS-CoV-2. This cleavage liberates the activating C-terminal fragment and activates NLRP1 inflammasome, leading to downstream activation of GSDME and lung epithelial cell death. Widely expressed. Abundantly expressed in primary immune cells (isoform 1 and isoform 2), including in neutrophils, monocytes/macrophages, dendritic cells (mostly Langerhans cells), and B- and T-lymphocytes (at protein level). Strongly expressed in epithelial cells lining the glandular epithelium, such as that of the gastrointestinal tract (stomach, small intestine, colon), the respiratory tract (trachea and bronchi), and the endometrial and endocervical glands, gallbladder, prostate, and breast (at protein level). In testis, expressed in spermatogonia and primary spermatocytes, but not in Sertoli cells (at protein level). In the brain, expressed in neurons, in particular in pyramidal ones and in oligodendrocytes, but not detected in microglia (at protein level). Expressed in adult and fetal ocular tissues, including in adult and 24-week old fetal choroid, sclera, cornea, and optic nerve, as well as in adult retina and fetal retina/retinal pigment epithelium. Highly expressed in the skin throughout the epidermis and in dermal fibroblasts, in both glabrous skin and plantar skin. It is detected in keratinocytes, but not in melanocytes. Expressed in epidermal appendages such as hair follicles.

Its subcellular location is the cytoplasm. It localises to the cytosol. It is found in the nucleus. The protein resides in the inflammasome. It carries out the reaction ATP + H2O = ADP + phosphate + H(+). Its activity is regulated as follows. NLRP1 inflammasome is activated by cleavage by the Protease 3C from various human enteroviruses and rhinoviruses (EV68, EV71, Coxsackievirus B3, HRV-14 and HRV-16): cleavage promotes ubiquitination and degradation of the N-terminal part, releasing the cleaved C-terminal part of the protein (NACHT, LRR and PYD domains-containing protein 1, C-terminus), which polymerizes and forms the NLRP1 inflammasome. Activated double-stranded RNA: positive-strand RNA viruses such as Semliki forest virus and long dsRNA activate the NLRP1 inflammasome. In contrast to its mouse ortholog, not activated by Bacillus anthracis lethal toxin. NLRP1 inflammasome is inhibited by DPP8 and DPP9, which sequester the C-terminal fragment of NLRP1 (NACHT, LRR and PYD domains-containing protein 1, C-terminus) in a ternary complex, thereby preventing NLRP1 oligomerization and activation. NLRP1 inflammasome is activated by Val-boroPro (Talabostat, PT-100), an inhibitor of dipeptidyl peptidases DPP8 and DPP9. Val-boroPro relieves inhibition of DPP8 and/or DPP9 by promoting disruption of the ternary complex, releasing its C-terminal part from autoinhibition. ATPase activity is activated by dsRNA-binding but not dsDNA-binding. (Microbial infection) The NLRP1 inflammasome is activated by human herpes virus 8/HHV-8 protein ORF45, which interacts with the N-terminal part of NLRP1 and promotes its translocation into the nucleus, relieving autoinhibition and leading to activation. With respect to regulation, (Microbial infection) NLRP1 inflammasome is activated by cleavage by the 3C-like proteinase nsp5 from human coronavirus SARS-CoV-2. Its function is as follows. Acts as the sensor component of the NLRP1 inflammasome, which mediates inflammasome activation in response to various pathogen-associated signals, leading to subsequent pyroptosis. Inflammasomes are supramolecular complexes that assemble in the cytosol in response to pathogens and other damage-associated signals and play critical roles in innate immunity and inflammation. Acts as a recognition receptor (PRR): recognizes specific pathogens and other damage-associated signals, such as cleavage by some human enteroviruses and rhinoviruses, double-stranded RNA, UV-B irradiation, or Val-boroPro inhibitor, and mediates the formation of the inflammasome polymeric complex composed of NLRP1, CASP1 and PYCARD/ASC. In response to pathogen-associated signals, the N-terminal part of NLRP1 is degraded by the proteasome, releasing the cleaved C-terminal part of the protein (NACHT, LRR and PYD domains-containing protein 1, C-terminus), which polymerizes and associates with PYCARD/ASC to initiate the formation of the inflammasome complex: the NLRP1 inflammasome recruits pro-caspase-1 (proCASP1) and promotes caspase-1 (CASP1) activation, which subsequently cleaves and activates inflammatory cytokines IL1B and IL18 and gasdermin-D (GSDMD), leading to pyroptosis. In the absence of GSDMD expression, the NLRP1 inflammasome is able to recruit and activate CASP8, leading to activation of gasdermin-E (GSDME). Activation of NLRP1 inflammasome is also required for HMGB1 secretion; the active cytokines and HMGB1 stimulate inflammatory responses. Binds ATP and shows ATPase activity. Plays an important role in antiviral immunity and inflammation in the human airway epithelium. Specifically recognizes a number of pathogen-associated signals: upon infection by human rhinoviruses 14 and 16 (HRV-14 and HRV-16), NLRP1 is cleaved and activated which triggers NLRP1-dependent inflammasome activation and IL18 secretion. Positive-strand RNA viruses, such as Semliki forest virus and long dsRNA activate the NLRP1 inflammasome, triggering IL1B release in a NLRP1-dependent fashion. Acts as a direct sensor for long dsRNA and thus RNA virus infection. May also be activated by muramyl dipeptide (MDP), a fragment of bacterial peptidoglycan, in a NOD2-dependent manner. The NLRP1 inflammasome is also activated in response to UV-B irradiation causing ribosome collisions: ribosome collisions cause phosphorylation and activation of NLRP1 in a MAP3K20-dependent manner, leading to pyroptosis. In terms of biological role, constitutes the precursor of the NLRP1 inflammasome, which mediates autoproteolytic processing within the FIIND domain to generate the N-terminal and C-terminal parts, which are associated non-covalently in absence of pathogens and other damage-associated signals. Regulatory part that prevents formation of the NLRP1 inflammasome: in absence of pathogens and other damage-associated signals, interacts with the C-terminal part of NLRP1 (NACHT, LRR and PYD domains-containing protein 1, C-terminus), preventing activation of the NLRP1 inflammasome. In response to pathogen-associated signals, this part is ubiquitinated and degraded by the proteasome, releasing the cleaved C-terminal part of the protein, which polymerizes and forms the NLRP1 inflammasome. Functionally, constitutes the active part of the NLRP1 inflammasome. In absence of pathogens and other damage-associated signals, interacts with the N-terminal part of NLRP1 (NACHT, LRR and PYD domains-containing protein 1, N-terminus), preventing activation of the NLRP1 inflammasome. In response to pathogen-associated signals, the N-terminal part of NLRP1 is degraded by the proteasome, releasing this form, which polymerizes and associates with PYCARD/ASC to form of the NLRP1 inflammasome complex: the NLRP1 inflammasome complex then directly recruits pro-caspase-1 (proCASP1) and promotes caspase-1 (CASP1) activation, leading to gasdermin-D (GSDMD) cleavage and subsequent pyroptosis. Its function is as follows. It is unclear whether is involved in inflammasome formation. It is not cleaved within the FIIND domain, does not assemble into specks, nor promote IL1B release. However, in an vitro cell-free system, it has been shown to be activated by MDP. This chain is NACHT, LRR and PYD domains-containing protein 1, found in Homo sapiens (Human).